Consider the following 135-residue polypeptide: MKRLLPSLRAKKRYLAFELISEVPVSRSDLVKEVMFSASSLLGDVTASECDIKVLGFEESKGIIQCAHTKVKETRASMATLTRINGKRATVHILGTSGTIKRATEKFLQNTAFEPEIRINPKRLKNNNLSRVQES.

Belongs to the eukaryotic/archaeal RNase P protein component 2 family. In terms of assembly, consists of a catalytic RNA component and at least 4-5 protein subunits.

The protein localises to the cytoplasm. The catalysed reaction is Endonucleolytic cleavage of RNA, removing 5'-extranucleotides from tRNA precursor.. In terms of biological role, part of ribonuclease P, a protein complex that generates mature tRNA molecules by cleaving their 5'-ends. The chain is Ribonuclease P protein component 2 from Methanosarcina barkeri (strain Fusaro / DSM 804).